Here is a 606-residue protein sequence, read N- to C-terminus: Aspartate--tRNA(Asp/Asn) ligase (606 aa).

Glu177 contributes to the L-aspartate binding site. Residues 201-204 are aspartate; it reads QLFK. Position 223 (Arg223) interacts with L-aspartate. ATP contacts are provided by residues 223 to 225 and Gln232; that span reads RDE. Residue His461 coordinates L-aspartate. Glu499 lines the ATP pocket. Position 506 (Arg506) interacts with L-aspartate. 551-554 provides a ligand contact to ATP; sequence GMDR.

It belongs to the class-II aminoacyl-tRNA synthetase family. Type 1 subfamily. As to quaternary structure, homodimer.

It is found in the cytoplasm. It catalyses the reaction tRNA(Asx) + L-aspartate + ATP = L-aspartyl-tRNA(Asx) + AMP + diphosphate. Functionally, aspartyl-tRNA synthetase with relaxed tRNA specificity since it is able to aspartylate not only its cognate tRNA(Asp) but also tRNA(Asn). Reaction proceeds in two steps: L-aspartate is first activated by ATP to form Asp-AMP and then transferred to the acceptor end of tRNA(Asp/Asn). The polypeptide is Aspartate--tRNA(Asp/Asn) ligase (Prochlorococcus marinus (strain MIT 9313)).